A 355-amino-acid chain; its full sequence is 3-dehydroquinate synthase (355 aa).

Residues 71–76 (EGEERK), 105–109 (GVVGD), 129–130 (TS), K142, and K151 contribute to the NAD(+) site. 3 residues coordinate Zn(2+): E184, H246, and H263.

This sequence belongs to the sugar phosphate cyclases superfamily. Dehydroquinate synthase family. Co(2+) serves as cofactor. Zn(2+) is required as a cofactor. Requires NAD(+) as cofactor.

It is found in the cytoplasm. The catalysed reaction is 7-phospho-2-dehydro-3-deoxy-D-arabino-heptonate = 3-dehydroquinate + phosphate. It functions in the pathway metabolic intermediate biosynthesis; chorismate biosynthesis; chorismate from D-erythrose 4-phosphate and phosphoenolpyruvate: step 2/7. Catalyzes the conversion of 3-deoxy-D-arabino-heptulosonate 7-phosphate (DAHP) to dehydroquinate (DHQ). The protein is 3-dehydroquinate synthase of Streptococcus pneumoniae (strain Hungary19A-6).